The following is a 436-amino-acid chain: GTPase Der (436 aa).

2 consecutive EngA-type G domains span residues 4–167 (PTVA…PNEI) and 175–351 (IKFS…HAQN). Residues 10-17 (GRPNVGKS), 57-61 (DTGGI), 119-122 (NKVD), 181-188 (GRPNVGKS), 229-233 (DTAGM), and 294-297 (NKWD) contribute to the GTP site. The 85-residue stretch at 352-436 (LRISSSVLND…PIHLIARKRK (85 aa)) folds into the KH-like domain.

The protein belongs to the TRAFAC class TrmE-Era-EngA-EngB-Septin-like GTPase superfamily. EngA (Der) GTPase family. Associates with the 50S ribosomal subunit.

In terms of biological role, GTPase that plays an essential role in the late steps of ribosome biogenesis. This Lactococcus lactis subsp. cremoris (strain SK11) protein is GTPase Der.